The primary structure comprises 71 residues: Small, acid-soluble spore protein I (71 aa).

Belongs to the SspI family.

It localises to the spore core. The polypeptide is Small, acid-soluble spore protein I (Bacillus velezensis (strain DSM 23117 / BGSC 10A6 / LMG 26770 / FZB42) (Bacillus amyloliquefaciens subsp. plantarum)).